A 1437-amino-acid polypeptide reads, in one-letter code: FYVE and coiled-coil domain-containing protein 1 (1437 aa).

Alanine 2 is modified (N-acetylalanine). A coiled-coil region spans residues 4–30 (SSTETQLQRIIRDLQDAATELSHEFKE). The RUN domain occupies 36-169 (TDDSTSLHKF…VQFDLAPRGY (134 aa)). A Phosphoserine modification is found at serine 196. Coiled coils occupy residues 223-270 (SLNN…VSRQ), 305-846 (SQAT…SEGA), and 873-1110 (ALTA…KDAL). Residue threonine 372 is modified to Phosphothreonine. Serine 837 bears the Phosphoserine mark. The FYVE-type zinc finger occupies 1132-1190 (DMEVNHCHDCKREFSWIVRRHHCRICGRIFCYYCCNNYVVTKPSGKKERCCRACFQKFG). Zn(2+) contacts are provided by cysteine 1138, cysteine 1141, cysteine 1154, cysteine 1157, cysteine 1162, cysteine 1165, cysteine 1182, and cysteine 1185. 2 disordered regions span residues 1191–1227 (EGSG…SQGI) and 1253–1289 (SGSS…TEDV). Over residues 1194–1206 (GSNDSSGSGTSQG) the composition is skewed to low complexity. 2 stretches are compositionally biased toward polar residues: residues 1218 to 1227 (SPQSIGSQGI) and 1253 to 1283 (SGSS…SLTP). The GOLD domain maps to 1296–1425 (EICLLKSGEL…SKKVLYHLTV (130 aa)).

Can form homodimers. Interacts (via C-terminus) with MAP1LC3B. Interacts with RAB7A; the interaction with RAB7A induces FYCO1 recruitment to late endosomal/lysosomal compartments. Expressed in heart and testis. Expressed in the eye lens.

Its subcellular location is the cytoplasmic vesicle. The protein resides in the autophagosome. It localises to the endosome. The protein localises to the lysosome. Its function is as follows. May mediate microtubule plus end-directed vesicle transport. This Mus musculus (Mouse) protein is FYVE and coiled-coil domain-containing protein 1 (Fyco1).